The following is a 348-amino-acid chain: tRNA pseudouridine synthase D (348 aa).

Residue Phe-27 participates in substrate binding. The active-site Nucleophile is Asp-80. Asn-129 contributes to the substrate binding site. Residues 155 to 303 (GVPNYFGSQR…VESARRAVLL (149 aa)) form the TRUD domain. Phe-329 is a substrate binding site.

Belongs to the pseudouridine synthase TruD family.

It catalyses the reaction uridine(13) in tRNA = pseudouridine(13) in tRNA. Its function is as follows. Responsible for synthesis of pseudouridine from uracil-13 in transfer RNAs. The polypeptide is tRNA pseudouridine synthase D (Pectobacterium carotovorum subsp. carotovorum (strain PC1)).